A 479-amino-acid polypeptide reads, in one-letter code: Aspartyl/glutamyl-tRNA(Asn/Gln) amidotransferase subunit B (479 aa).

The protein belongs to the GatB/GatE family. GatB subfamily. Heterotrimer of A, B and C subunits.

It catalyses the reaction L-glutamyl-tRNA(Gln) + L-glutamine + ATP + H2O = L-glutaminyl-tRNA(Gln) + L-glutamate + ADP + phosphate + H(+). It carries out the reaction L-aspartyl-tRNA(Asn) + L-glutamine + ATP + H2O = L-asparaginyl-tRNA(Asn) + L-glutamate + ADP + phosphate + 2 H(+). In terms of biological role, allows the formation of correctly charged Asn-tRNA(Asn) or Gln-tRNA(Gln) through the transamidation of misacylated Asp-tRNA(Asn) or Glu-tRNA(Gln) in organisms which lack either or both of asparaginyl-tRNA or glutaminyl-tRNA synthetases. The reaction takes place in the presence of glutamine and ATP through an activated phospho-Asp-tRNA(Asn) or phospho-Glu-tRNA(Gln). This is Aspartyl/glutamyl-tRNA(Asn/Gln) amidotransferase subunit B from Streptococcus pyogenes serotype M12 (strain MGAS2096).